Reading from the N-terminus, the 274-residue chain is Glucosamine-6-phosphate deaminase (274 aa).

The active-site Proton acceptor; for enolization step is Asp-71. Residue Asp-140 is the For ring-opening step of the active site. The active-site Proton acceptor; for ring-opening step is His-142. Residue Glu-147 is the For ring-opening step of the active site.

This sequence belongs to the glucosamine/galactosamine-6-phosphate isomerase family. NagB subfamily.

The catalysed reaction is alpha-D-glucosamine 6-phosphate + H2O = beta-D-fructose 6-phosphate + NH4(+). It functions in the pathway amino-sugar metabolism; N-acetylneuraminate degradation; D-fructose 6-phosphate from N-acetylneuraminate: step 5/5. Functionally, catalyzes the reversible isomerization-deamination of glucosamine 6-phosphate (GlcN6P) to form fructose 6-phosphate (Fru6P) and ammonium ion. The sequence is that of Glucosamine-6-phosphate deaminase from Fusobacterium nucleatum subsp. nucleatum (strain ATCC 25586 / DSM 15643 / BCRC 10681 / CIP 101130 / JCM 8532 / KCTC 2640 / LMG 13131 / VPI 4355).